The following is a 227-amino-acid chain: Protein CAP22 (227 aa).

N55 and N72 each carry an N-linked (GlcNAc...) asparagine glycan. Positions 143–162 (TTIGGGATPAPTSERSRTSD) are disordered.

It is found in the secreted. The protein localises to the cell wall. In Colletotrichum gloeosporioides (Anthracnose fungus), this protein is Protein CAP22 (CAP22).